The following is an 877-amino-acid chain: Alanine--tRNA ligase (877 aa).

Zn(2+)-binding residues include histidine 562, histidine 566, cysteine 664, and histidine 668.

Belongs to the class-II aminoacyl-tRNA synthetase family. It depends on Zn(2+) as a cofactor.

The protein resides in the cytoplasm. The enzyme catalyses tRNA(Ala) + L-alanine + ATP = L-alanyl-tRNA(Ala) + AMP + diphosphate. Catalyzes the attachment of alanine to tRNA(Ala) in a two-step reaction: alanine is first activated by ATP to form Ala-AMP and then transferred to the acceptor end of tRNA(Ala). Also edits incorrectly charged Ser-tRNA(Ala) and Gly-tRNA(Ala) via its editing domain. This chain is Alanine--tRNA ligase, found in Synechocystis sp. (strain ATCC 27184 / PCC 6803 / Kazusa).